Consider the following 64-residue polypeptide: Large ribosomal subunit protein uL29 (64 aa).

The protein belongs to the universal ribosomal protein uL29 family.

This chain is Large ribosomal subunit protein uL29, found in Maridesulfovibrio salexigens (strain ATCC 14822 / DSM 2638 / NCIMB 8403 / VKM B-1763) (Desulfovibrio salexigens).